We begin with the raw amino-acid sequence, 456 residues long: ATP synthase subunit beta 1 (456 aa).

152–159 serves as a coordination point for ATP; sequence GGAGVGKS.

This sequence belongs to the ATPase alpha/beta chains family. In terms of assembly, F-type ATPases have 2 components, CF(1) - the catalytic core - and CF(0) - the membrane proton channel. CF(1) has five subunits: alpha(3), beta(3), gamma(1), delta(1), epsilon(1). CF(0) has three main subunits: a(1), b(2) and c(9-12). The alpha and beta chains form an alternating ring which encloses part of the gamma chain. CF(1) is attached to CF(0) by a central stalk formed by the gamma and epsilon chains, while a peripheral stalk is formed by the delta and b chains.

Its subcellular location is the cell membrane. The enzyme catalyses ATP + H2O + 4 H(+)(in) = ADP + phosphate + 5 H(+)(out). Functionally, produces ATP from ADP in the presence of a proton gradient across the membrane. The catalytic sites are hosted primarily by the beta subunits. This is ATP synthase subunit beta 1 from Listeria monocytogenes serovar 1/2a (strain ATCC BAA-679 / EGD-e).